The sequence spans 316 residues: NADH-cytochrome b5 reductase-like (316 aa).

Residues 17-53 enclose the Oxidoreductase-like domain; sequence KPVEPLPSQCCGSGCSPCVFDLYYRDLERWETARARN. The 103-residue stretch at 76-178 folds into the FAD-binding FR-type domain; that stretch reads ETFLAFHIST…RGPFGSFLYE (103 aa). FAD contacts are provided by residues 158–173 and 183–215; these read ESWRTGDTAFWRGPFG and GELLMLAAGTGLAPMVPILQSITDDEDDETFVT.

It belongs to the flavoprotein pyridine nucleotide cytochrome reductase family. Requires FAD as cofactor.

It catalyses the reaction 2 Fe(III)-[cytochrome b5] + NADH = 2 Fe(II)-[cytochrome b5] + NAD(+) + H(+). NADH-cytochrome b5 reductases are involved in desaturation and elongation of fatty acids, cholesterol biosynthesis, drug metabolism, and, in erythrocyte, methemoglobin reduction. In Mus musculus (Mouse), this protein is NADH-cytochrome b5 reductase-like (Cyb5rl).